The sequence spans 236 residues: Demethylmenaquinone methyltransferase (236 aa).

S-adenosyl-L-methionine is bound by residues threonine 58, aspartate 79, and 106–107 (NA).

The protein belongs to the class I-like SAM-binding methyltransferase superfamily. MenG/UbiE family.

The enzyme catalyses a 2-demethylmenaquinol + S-adenosyl-L-methionine = a menaquinol + S-adenosyl-L-homocysteine + H(+). It functions in the pathway quinol/quinone metabolism; menaquinone biosynthesis; menaquinol from 1,4-dihydroxy-2-naphthoate: step 2/2. Methyltransferase required for the conversion of demethylmenaquinol (DMKH2) to menaquinol (MKH2). The sequence is that of Demethylmenaquinone methyltransferase from Listeria welshimeri serovar 6b (strain ATCC 35897 / DSM 20650 / CCUG 15529 / CIP 8149 / NCTC 11857 / SLCC 5334 / V8).